The following is a 173-amino-acid chain: Large ribosomal subunit protein uL16 (173 aa).

It belongs to the universal ribosomal protein uL16 family.

This is Large ribosomal subunit protein uL16 from Methanosarcina acetivorans (strain ATCC 35395 / DSM 2834 / JCM 12185 / C2A).